A 254-amino-acid polypeptide reads, in one-letter code: Imidazole glycerol phosphate synthase subunit HisF (254 aa).

Catalysis depends on residues Asp12 and Asp132.

It belongs to the HisA/HisF family. In terms of assembly, heterodimer of HisH and HisF.

The protein localises to the cytoplasm. The enzyme catalyses 5-[(5-phospho-1-deoxy-D-ribulos-1-ylimino)methylamino]-1-(5-phospho-beta-D-ribosyl)imidazole-4-carboxamide + L-glutamine = D-erythro-1-(imidazol-4-yl)glycerol 3-phosphate + 5-amino-1-(5-phospho-beta-D-ribosyl)imidazole-4-carboxamide + L-glutamate + H(+). It participates in amino-acid biosynthesis; L-histidine biosynthesis; L-histidine from 5-phospho-alpha-D-ribose 1-diphosphate: step 5/9. IGPS catalyzes the conversion of PRFAR and glutamine to IGP, AICAR and glutamate. The HisF subunit catalyzes the cyclization activity that produces IGP and AICAR from PRFAR using the ammonia provided by the HisH subunit. This is Imidazole glycerol phosphate synthase subunit HisF from Symbiobacterium thermophilum (strain DSM 24528 / JCM 14929 / IAM 14863 / T).